The sequence spans 309 residues: Homoserine kinase (309 aa).

95 to 105 is a binding site for ATP; it reads PHGRGLGSSSA.

This sequence belongs to the GHMP kinase family. Homoserine kinase subfamily.

Its subcellular location is the cytoplasm. It catalyses the reaction L-homoserine + ATP = O-phospho-L-homoserine + ADP + H(+). It functions in the pathway amino-acid biosynthesis; L-threonine biosynthesis; L-threonine from L-aspartate: step 4/5. In terms of biological role, catalyzes the ATP-dependent phosphorylation of L-homoserine to L-homoserine phosphate. This Streptomyces coelicolor (strain ATCC BAA-471 / A3(2) / M145) protein is Homoserine kinase.